Consider the following 215-residue polypeptide: Nucleoredoxin-like protein 1 (215 aa).

The 165-residue stretch at 1 to 165 (MADLFLDKIL…VSEIIDRSFL (165 aa)) folds into the Thioredoxin; atypical domain. The span at 185–194 (IKYKDETTNE) shows a compositional bias: basic and acidic residues. A disordered region spans residues 185–215 (IKYKDETTNEKKKRKHCDDEDEGGGGGTEFF).

This sequence belongs to the nucleoredoxin family.

It localises to the cell projection. It is found in the cilium. Its subcellular location is the photoreceptor outer segment. In terms of biological role, plays an important role in retinal cone photoreceptor survival. May play a role in cone cell viability, slowing down cone degeneration, does not seem to play a role in degenerating rods. This is Nucleoredoxin-like protein 1 (nxnl1) from Xenopus laevis (African clawed frog).